Consider the following 317-residue polypeptide: MRSYKLIAPAKINLYLEIIGDRPDGYHELVMILQSIDLADEIEIHSLSSETIRVHCNHPQVPTDKSNLVYRAAELMATKFPEAFAKYGGVDITVHKHIPVAAGLAGGSTNAAAVLVGIDLLWNLGLTQTELEELGSILGSDVPFCVAGGTVIATGRGEQLSPLPNLDHIYIVLGKYRSLEVSTAWAYKTYRQEYGSTYLRDTNDLASRAAAVHSGSIVKAIVEKDAVAIAQKLHNDLEKVVLPSYPQVLQLRELFASQPSVIGTMMSGSGPSVFALCENQAQAEQVQQQVRQTIPDEDLELFVTRTITHGIQVLGNE.

Residue Lys11 is part of the active site. 99-109 (PVAAGLAGGST) provides a ligand contact to ATP. Residue Asp141 is part of the active site.

This sequence belongs to the GHMP kinase family. IspE subfamily.

It catalyses the reaction 4-CDP-2-C-methyl-D-erythritol + ATP = 4-CDP-2-C-methyl-D-erythritol 2-phosphate + ADP + H(+). The protein operates within isoprenoid biosynthesis; isopentenyl diphosphate biosynthesis via DXP pathway; isopentenyl diphosphate from 1-deoxy-D-xylulose 5-phosphate: step 3/6. Its function is as follows. Catalyzes the phosphorylation of the position 2 hydroxy group of 4-diphosphocytidyl-2C-methyl-D-erythritol. The sequence is that of 4-diphosphocytidyl-2-C-methyl-D-erythritol kinase from Trichormus variabilis (strain ATCC 29413 / PCC 7937) (Anabaena variabilis).